The following is a 228-amino-acid chain: Urease accessory protein UreF (228 aa).

Belongs to the UreF family. UreD, UreF and UreG form a complex that acts as a GTP-hydrolysis-dependent molecular chaperone, activating the urease apoprotein by helping to assemble the nickel containing metallocenter of UreC. The UreE protein probably delivers the nickel.

The protein localises to the cytoplasm. Functionally, required for maturation of urease via the functional incorporation of the urease nickel metallocenter. The chain is Urease accessory protein UreF from Prochlorococcus marinus (strain MIT 9215).